The sequence spans 315 residues: Glycine--tRNA ligase alpha subunit (315 aa).

This sequence belongs to the class-II aminoacyl-tRNA synthetase family. In terms of assembly, tetramer of two alpha and two beta subunits.

It localises to the cytoplasm. It catalyses the reaction tRNA(Gly) + glycine + ATP = glycyl-tRNA(Gly) + AMP + diphosphate. The polypeptide is Glycine--tRNA ligase alpha subunit (Sorangium cellulosum (strain So ce56) (Polyangium cellulosum (strain So ce56))).